Here is a 412-residue protein sequence, read N- to C-terminus: Poly-beta-1,6-N-acetyl-D-glucosamine synthase (412 aa).

A run of 4 helical transmembrane segments spans residues 6–28 (FLLFYPVFMSIYWIVGSIYFYFT), 290–312 (LYILMFEQIISILWVYIVLLYLG), 332–354 (IFLLSSFTMTFINVIQFTVALFI), and 366–388 (LIFVSWYPTVYWIINAAVVLVAF).

The protein belongs to the glycosyltransferase 2 family.

The protein resides in the cell membrane. Its function is as follows. N-acetylglucosaminyltransferase that catalyzes the polymerization of single monomer units of UDP-N-acetylglucosamine to produce the linear homomer poly-beta-1,6-N-acetyl-D-glucosamine (PNAG, also referred to as PIA), a biofilm adhesin polysaccharide. Requires IcaD for full activity. This chain is Poly-beta-1,6-N-acetyl-D-glucosamine synthase (icaA), found in Staphylococcus aureus (strain MSSA476).